A 957-amino-acid polypeptide reads, in one-letter code: Retinoblastoma-related protein 1 (957 aa).

A domain A region spans residues threonine 369–leucine 569. A pocket region spans residues threonine 369–proline 808. The segment at isoleucine 570–glutamate 677 is spacer. Residues threonine 678 to proline 808 form a domain B region. The disordered stretch occupies residues glycine 814 to valine 854.

Belongs to the retinoblastoma protein (RB) family.

The protein resides in the nucleus. Regulator of biological processes that recruits a histone deacetylase to control gene transcription. May play a role in the entry into mitosis, negatively regulating the cell proliferation. Formation of stable complexes with geminiviridae replication-associated proteins may create a cellular environment which favors viral DNA replication. This is Retinoblastoma-related protein 1 (RBR1) from Triticum aestivum (Wheat).